We begin with the raw amino-acid sequence, 125 residues long: U11-myrmicitoxin-Ta1a (125 aa).

The first 21 residues, 1–21 (MKTVIFILGFAFVAILIPTNG), serve as a signal peptide directing secretion. A propeptide spanning residues 22–91 (ESMADADAMA…RAMAAAYAAA (70 aa)) is cleaved from the precursor. An intrachain disulfide couples C101 to C124.

The protein belongs to the formicidae venom precursor-01 superfamily. In terms of tissue distribution, expressed by the venom gland.

The protein localises to the secreted. It localises to the target cell membrane. In terms of biological role, neurotoxin that causes irreversible rapid flaccid paralysis in blowflies and honeybees upon intrathoracic injection. Causes a quick and irreversible cytolytic effect (at 10 uM) indicating it possibly acts as a pore-forming peptide. Shows only weak effect on aphids (A.pisum) at high doses 24 hours post intrathoracic injection. In vitro, is not cytotoxic on the dipteran S2 Drosophila embryonic cell line. The sequence is that of U11-myrmicitoxin-Ta1a from Tetramorium africanum (Fierce ant).